Reading from the N-terminus, the 787-residue chain is Endonuclease MutS2 (787 aa).

Position 329–336 (329–336 (GPNTGGKT)) interacts with ATP. The Smr domain maps to 712 to 787 (INLLGCTVDE…DAGVTIVDFK (76 aa)).

This sequence belongs to the DNA mismatch repair MutS family. MutS2 subfamily. Homodimer. Binds to stalled ribosomes, contacting rRNA.

Its function is as follows. Endonuclease that is involved in the suppression of homologous recombination and thus may have a key role in the control of bacterial genetic diversity. Functionally, acts as a ribosome collision sensor, splitting the ribosome into its 2 subunits. Detects stalled/collided 70S ribosomes which it binds and splits by an ATP-hydrolysis driven conformational change. Acts upstream of the ribosome quality control system (RQC), a ribosome-associated complex that mediates the extraction of incompletely synthesized nascent chains from stalled ribosomes and their subsequent degradation. Probably generates substrates for RQC. This chain is Endonuclease MutS2, found in Lachnospira eligens (strain ATCC 27750 / DSM 3376 / VPI C15-48 / C15-B4) (Eubacterium eligens).